The following is a 750-amino-acid chain: 5-methyltetrahydropteroyltriglutamate--homocysteine methyltransferase (750 aa).

5-methyltetrahydropteroyltri-L-glutamate-binding positions include 15–18 (RELK) and Lys-114. L-homocysteine contacts are provided by residues 425–427 (IGS) and Glu-478. Residues 425-427 (IGS) and Glu-478 each bind L-methionine. 5-methyltetrahydropteroyltri-L-glutamate is bound at residue Trp-555. Asp-593 is an L-homocysteine binding site. Asp-593 is an L-methionine binding site. Glu-599 is a 5-methyltetrahydropteroyltri-L-glutamate binding site. Residues His-636, Cys-638, and Glu-660 each contribute to the Zn(2+) site. Residue His-689 is the Proton donor of the active site. Cys-721 is a binding site for Zn(2+).

Belongs to the vitamin-B12 independent methionine synthase family. It depends on Zn(2+) as a cofactor.

It carries out the reaction 5-methyltetrahydropteroyltri-L-glutamate + L-homocysteine = tetrahydropteroyltri-L-glutamate + L-methionine. It functions in the pathway amino-acid biosynthesis; L-methionine biosynthesis via de novo pathway; L-methionine from L-homocysteine (MetE route): step 1/1. In terms of biological role, catalyzes the transfer of a methyl group from 5-methyltetrahydrofolate to homocysteine resulting in methionine formation. In Streptococcus gordonii (strain Challis / ATCC 35105 / BCRC 15272 / CH1 / DL1 / V288), this protein is 5-methyltetrahydropteroyltriglutamate--homocysteine methyltransferase.